Here is a 292-residue protein sequence, read N- to C-terminus: Bifunctional protein FolD 2 (292 aa).

NADP(+) is bound by residues 166-168 (GHS) and isoleucine 232.

The protein belongs to the tetrahydrofolate dehydrogenase/cyclohydrolase family. Homodimer.

It catalyses the reaction (6R)-5,10-methylene-5,6,7,8-tetrahydrofolate + NADP(+) = (6R)-5,10-methenyltetrahydrofolate + NADPH. It carries out the reaction (6R)-5,10-methenyltetrahydrofolate + H2O = (6R)-10-formyltetrahydrofolate + H(+). The protein operates within one-carbon metabolism; tetrahydrofolate interconversion. Its function is as follows. Catalyzes the oxidation of 5,10-methylenetetrahydrofolate to 5,10-methenyltetrahydrofolate and then the hydrolysis of 5,10-methenyltetrahydrofolate to 10-formyltetrahydrofolate. The sequence is that of Bifunctional protein FolD 2 from Ruegeria pomeroyi (strain ATCC 700808 / DSM 15171 / DSS-3) (Silicibacter pomeroyi).